A 484-amino-acid polypeptide reads, in one-letter code: Calcium-dependent protein kinase 26 (484 aa).

A Protein kinase domain is found at 24-282 (YSLGHKLGQG…AHQVLRHPWI (259 aa)). ATP contacts are provided by residues 30-38 (LGQGQFGTT) and Lys-53. Asp-148 serves as the catalytic Proton acceptor. Ser-188 bears the Phosphoserine mark. The segment at 288-318 (APDRALDPAVLSRLKQFSAMNKLKQMALRVI) is autoinhibitory domain. EF-hand domains are found at residues 325–360 (EEIA…YGST), 361–396 (LKDT…LNKL), 397–432 (EREE…QGMS), and 436–466 (LEDV…GIVG). Ca(2+)-binding residues include Asp-338, Asp-340, Ser-342, Glu-349, Asp-374, Asp-376, Ser-378, Thr-380, Glu-385, Asp-410, Asp-412, Ser-414, Tyr-416, Glu-421, Asp-444, Asp-446, Asp-448, Arg-450, and Glu-455.

The protein belongs to the protein kinase superfamily. Ser/Thr protein kinase family. CDPK subfamily.

The enzyme catalyses L-seryl-[protein] + ATP = O-phospho-L-seryl-[protein] + ADP + H(+). It catalyses the reaction L-threonyl-[protein] + ATP = O-phospho-L-threonyl-[protein] + ADP + H(+). Its activity is regulated as follows. Activated by calcium. Autophosphorylation may play an important role in the regulation of the kinase activity. In terms of biological role, may play a role in signal transduction pathways that involve calcium as a second messenger. The protein is Calcium-dependent protein kinase 26 (CPK26) of Arabidopsis thaliana (Mouse-ear cress).